The chain runs to 398 residues: Autophagy-related protein 39 (398 aa).

An ATG8-binding motif is present at residues 8–11 (WNLV). The segment at 15-50 (RLRKGREGEEQSSKSEISLDSLHESSFAGEDDEDFD) is disordered. The ATG11-binding signature appears at 52-59 (DVLSNTSS). A helical transmembrane segment spans residues 148 to 164 (VIMLSSLLSMTFSYLAL).

In terms of assembly, interacts with ATG8 and ATG11.

It localises to the endoplasmic reticulum membrane. Its subcellular location is the preautophagosomal structure membrane. Its function is as follows. Acts as a receptor for reticulophagy and nucleophagy. Directs autophagic sequestration of double-membrane vesicles derived from the nuclear envelope and perinuclear endoplasmic reticulum (pnER) into autophagosomes. Is not required for the cytoplasm-to-vacuole targeting pathway, mitophagy, pexophagy, and non-selective autophagy. The protein is Autophagy-related protein 39 of Saccharomyces cerevisiae (strain ATCC 204508 / S288c) (Baker's yeast).